We begin with the raw amino-acid sequence, 212 residues long: SOSS complex subunit B1 (212 aa).

The segment at residues 22–92 (IVLETGRVTK…TLYTGRGGDL (71 aa)) is a DNA-binding region (OB). Residues 110 to 212 (EPNPEYNTQQ…GKETRRSSKR (103 aa)) form a disordered region. The span at 114–130 (EYNTQQAPNKSVQNNDN) shows a compositional bias: polar residues. Thr-117 carries the post-translational modification Phosphothreonine; by ATM. Low complexity predominate over residues 131–148 (SPTAPQATTGPPAASPAS). Residues 149 to 160 (ENQNGNGLSTQL) show a composition bias toward polar residues. Positions 166–178 (PHPSHTPSHPPST) are enriched in low complexity.

Belongs to the SOSS-B family. SOSS-B1 subfamily. Component of the SOSS complex, composed of SOSS-B (SOSS-B1/NABP2 or SOSS-B2/NABP1), SOSS-A/INTS3 and SOSS-C/INIP. SOSS complexes containing SOSS-B1/NABP2 are more abundant than complexes containing SOSS-B2/NABP1. Directly interacts with ATM, SOSS-A/INTS3 and RAD51. Interacts with INTS7. In terms of processing, phosphorylated by ATM in response to DNA damage. Phosphorylation prevents degradation by the proteasome, hence stabilization of the protein and accumulation within cells. Post-translationally, ubiquitinated in a FBXL5-dependent manner, leading to proteasomal degradation.

The protein resides in the nucleus. In terms of biological role, component of the SOSS complex, a multiprotein complex that functions downstream of the MRN complex to promote DNA repair and G2/M checkpoint. In the SOSS complex, acts as a sensor of single-stranded DNA that binds to single-stranded DNA, in particular to polypyrimidines. The SOSS complex associates with DNA lesions and influences diverse endpoints in the cellular DNA damage response including cell-cycle checkpoint activation, recombinational repair and maintenance of genomic stability. Required for efficient homologous recombination-dependent repair of double-strand breaks (DSBs) and ATM-dependent signaling pathways. This Mus musculus (Mouse) protein is SOSS complex subunit B1 (Nabp2).